The sequence spans 292 residues: MQQLIEKASTLMEALPYIRRFSGKTIVIKYGGHAMADEKLRKSFALDVILLKYIGINTVVVHGGGPQINETLKRYGIVSEFVKGMRVTDKETMGVVEMVLTGQVNREVVGYINQNGGRAAGLSGKDGDLLICEKLLQEVKSEDGSTETVDIGFVGDVVEVNPAILQALEKGGFIPVIAPVGVGRAGESYNINADVVAGKVAAALNAEKLILLTDVSGVKSKEGELLSSIPLADVPALIDNGTVTGGMIPKVTCCTDALAAGVKKAHIVDGRIEHAILLEIFTNVGIGTEIQA.

Residues Gly-64–Gly-65, Arg-86, and Asn-190 each bind substrate.

This sequence belongs to the acetylglutamate kinase family. ArgB subfamily.

It is found in the cytoplasm. The catalysed reaction is N-acetyl-L-glutamate + ATP = N-acetyl-L-glutamyl 5-phosphate + ADP. The protein operates within amino-acid biosynthesis; L-arginine biosynthesis; N(2)-acetyl-L-ornithine from L-glutamate: step 2/4. Catalyzes the ATP-dependent phosphorylation of N-acetyl-L-glutamate. The polypeptide is Acetylglutamate kinase (Citrifermentans bemidjiense (strain ATCC BAA-1014 / DSM 16622 / JCM 12645 / Bem) (Geobacter bemidjiensis)).